Reading from the N-terminus, the 236-residue chain is MPTLHIKSEKNAFSNIVLMPGDPVRAKYIAENYLANPVQINDTRLMLAYTGYYKNKKISVMSHGMGIPSASLYVRELILEYNVKKIIRVGTCGTIQNNIKLRDIVISMGASTDSKINRIRFNNHDYAAIADFEMIFHAFSTAKKMNFKVHIGNFFTTDSFYTESEDMLKILKKYNIIGIDMETAGIYAVAAELKAQALSICTVSDHIIKKDAVSSKDRESSFHNMITLSLETTLLL.

Histidine 5 serves as a coordination point for a purine D-ribonucleoside. Phosphate contacts are provided by residues glycine 21, arginine 25, arginine 44, and 88-91 (RVGT). A purine D-ribonucleoside-binding positions include 180-182 (DME) and 204-205 (SD). Catalysis depends on aspartate 205, which acts as the Proton donor.

The protein belongs to the PNP/UDP phosphorylase family. Homohexamer; trimer of homodimers.

It carries out the reaction a purine D-ribonucleoside + phosphate = a purine nucleobase + alpha-D-ribose 1-phosphate. The catalysed reaction is a purine 2'-deoxy-D-ribonucleoside + phosphate = a purine nucleobase + 2-deoxy-alpha-D-ribose 1-phosphate. Functionally, catalyzes the reversible phosphorolytic breakdown of the N-glycosidic bond in the beta-(deoxy)ribonucleoside molecules, with the formation of the corresponding free purine bases and pentose-1-phosphate. This is Purine nucleoside phosphorylase DeoD-type from Buchnera aphidicola subsp. Schizaphis graminum (strain Sg).